A 145-amino-acid chain; its full sequence is Bacilliredoxin SAOUHSC_01610 (145 aa).

Belongs to the bacilliredoxin family.

The polypeptide is Bacilliredoxin SAOUHSC_01610 (Staphylococcus aureus (strain NCTC 8325 / PS 47)).